Here is a 232-residue protein sequence, read N- to C-terminus: Orotidine 5'-phosphate decarboxylase (232 aa).

Substrate contacts are provided by residues D13, K35, 62–71, T122, R182, Q191, G211, and R212; that span reads DLKFHDIPNT. K64 functions as the Proton donor in the catalytic mechanism.

This sequence belongs to the OMP decarboxylase family. Type 1 subfamily. Homodimer.

The catalysed reaction is orotidine 5'-phosphate + H(+) = UMP + CO2. The protein operates within pyrimidine metabolism; UMP biosynthesis via de novo pathway; UMP from orotate: step 2/2. Catalyzes the decarboxylation of orotidine 5'-monophosphate (OMP) to uridine 5'-monophosphate (UMP). In Pseudomonas fluorescens (strain SBW25), this protein is Orotidine 5'-phosphate decarboxylase.